Reading from the N-terminus, the 130-residue chain is Small ribosomal subunit protein uS8 (130 aa).

Belongs to the universal ribosomal protein uS8 family. In terms of assembly, part of the 30S ribosomal subunit.

Its function is as follows. One of the primary rRNA binding proteins, it binds directly to 16S rRNA central domain where it helps coordinate assembly of the platform of the 30S subunit. This is Small ribosomal subunit protein uS8 from Methanococcus vannielii (strain ATCC 35089 / DSM 1224 / JCM 13029 / OCM 148 / SB).